The primary structure comprises 369 residues: Mitogen-activated protein kinase 11 (369 aa).

The 287-residue stretch at 40 to 326 folds into the Protein kinase domain; the sequence is VPPLRPIGRG…VDEALCHPYL (287 aa). Residues 46 to 54 and Lys-69 contribute to the ATP site; that span reads IGRGASGIV. The active-site Proton acceptor is Asp-166. Thr-198 carries the post-translational modification Phosphothreonine. The short motif at 198–200 is the TXY element; that stretch reads TEY. Residue Tyr-200 is modified to Phosphotyrosine. Position 203 is a phosphothreonine (Thr-203).

This sequence belongs to the protein kinase superfamily. CMGC Ser/Thr protein kinase family. MAP kinase subfamily. Interacts with MKK1, MKK2 and MKK6. Dually phosphorylated on Thr-198 and Tyr-200, which activates the enzyme.

The enzyme catalyses L-seryl-[protein] + ATP = O-phospho-L-seryl-[protein] + ADP + H(+). It catalyses the reaction L-threonyl-[protein] + ATP = O-phospho-L-threonyl-[protein] + ADP + H(+). Its activity is regulated as follows. Activated by threonine and tyrosine phosphorylation. This Arabidopsis thaliana (Mouse-ear cress) protein is Mitogen-activated protein kinase 11 (MPK11).